Here is a 73-residue protein sequence, read N- to C-terminus: UPF0346 protein SAS1364 (73 aa).

This sequence belongs to the UPF0346 family.

This Staphylococcus aureus (strain MSSA476) protein is UPF0346 protein SAS1364.